The sequence spans 359 residues: Carbamoyl phosphate synthase small chain (359 aa).

The interval 1–169 (MTKRILVLED…TKTSYPAPGV (169 aa)) is CPSase. Residues Ser46, Gly220, and Gly222 each contribute to the L-glutamine site. The region spanning 172 to 358 (SVVLVDFGLK…IEMMEVFKQS (187 aa)) is the Glutamine amidotransferase type-1 domain. Residue Cys247 is the Nucleophile of the active site. The L-glutamine site is built by Met248, Gln251, Asn289, Gly291, and Tyr292. Active-site residues include His331 and Asp333.

Belongs to the CarA family. Composed of two chains; the small (or glutamine) chain promotes the hydrolysis of glutamine to ammonia, which is used by the large (or ammonia) chain to synthesize carbamoyl phosphate. Tetramer of heterodimers (alpha,beta)4.

It carries out the reaction hydrogencarbonate + L-glutamine + 2 ATP + H2O = carbamoyl phosphate + L-glutamate + 2 ADP + phosphate + 2 H(+). It catalyses the reaction L-glutamine + H2O = L-glutamate + NH4(+). The protein operates within amino-acid biosynthesis; L-arginine biosynthesis; carbamoyl phosphate from bicarbonate: step 1/1. It participates in pyrimidine metabolism; UMP biosynthesis via de novo pathway; (S)-dihydroorotate from bicarbonate: step 1/3. Functionally, small subunit of the glutamine-dependent carbamoyl phosphate synthetase (CPSase). CPSase catalyzes the formation of carbamoyl phosphate from the ammonia moiety of glutamine, carbonate, and phosphate donated by ATP, constituting the first step of 2 biosynthetic pathways, one leading to arginine and/or urea and the other to pyrimidine nucleotides. The small subunit (glutamine amidotransferase) binds and cleaves glutamine to supply the large subunit with the substrate ammonia. The chain is Carbamoyl phosphate synthase small chain from Streptococcus pneumoniae (strain ATCC BAA-255 / R6).